Here is a 247-residue protein sequence, read N- to C-terminus: Triosephosphate isomerase (247 aa).

The substrate site is built by Asn10 and Lys12. The active-site Electrophile is His94. Glu164 serves as the catalytic Proton acceptor.

Belongs to the triosephosphate isomerase family. Homodimer.

It carries out the reaction D-glyceraldehyde 3-phosphate = dihydroxyacetone phosphate. It functions in the pathway carbohydrate biosynthesis; gluconeogenesis. The protein operates within carbohydrate degradation; glycolysis; D-glyceraldehyde 3-phosphate from glycerone phosphate: step 1/1. This chain is Triosephosphate isomerase (Tpi), found in Drosophila simulans (Fruit fly).